A 317-amino-acid polypeptide reads, in one-letter code: Ribosomal protein L11 methyltransferase (317 aa).

Positions 158, 179, 201, and 244 each coordinate S-adenosyl-L-methionine.

This sequence belongs to the methyltransferase superfamily. PrmA family.

It is found in the cytoplasm. The enzyme catalyses L-lysyl-[protein] + 3 S-adenosyl-L-methionine = N(6),N(6),N(6)-trimethyl-L-lysyl-[protein] + 3 S-adenosyl-L-homocysteine + 3 H(+). Functionally, methylates ribosomal protein L11. The protein is Ribosomal protein L11 methyltransferase of Streptococcus pyogenes serotype M3 (strain ATCC BAA-595 / MGAS315).